A 135-amino-acid chain; its full sequence is Protein Wnt-7a (135 aa).

Cystine bridges form between Cys-3-Cys-17 and Cys-5-Cys-12. Ser-9 carries O-palmitoleoyl serine; by PORCN lipidation. The interval 41–69 is disordered linker; it reads VEPVRASRNKRPTFLKIKKPLSYRKPMDT. Intrachain disulfides connect Cys-81–Cys-112, Cys-97–Cys-107, Cys-111–Cys-134, and Cys-130–Cys-131. Asn-98 carries N-linked (GlcNAc...) asparagine glycosylation.

Belongs to the Wnt family. Palmitoleoylation is required for efficient binding to frizzled receptors. Depalmitoleoylation leads to Wnt signaling pathway inhibition. In terms of tissue distribution, in embryo, in brain and ventral neural tube; in adults, in brain.

It is found in the secreted. The protein localises to the extracellular space. It localises to the extracellular matrix. Ligand for members of the frizzled family of seven transmembrane receptors that functions in the canonical Wnt/beta-catenin signaling pathway. Plays an important role in embryonic development, including dorsal versus ventral patterning during limb development, skeleton development and urogenital tract development. Required for central nervous system (CNS) angiogenesis and blood-brain barrier regulation. This is Protein Wnt-7a (wnt7a) from Xenopus laevis (African clawed frog).